Here is a 245-residue protein sequence, read N- to C-terminus: Phosducin (245 aa).

The disordered stretch occupies residues 1–70 (MEKAKSQSLE…DKDSKERFSR (70 aa)). The Phosducin domain occupies 1–244 (MEKAKSQSLE…LEQTNMEEDM (244 aa)). 2 stretches are compositionally biased toward basic and acidic residues: residues 28 to 50 (DWRK…KEIL) and 58 to 69 (SRDDKDSKERFS). Ser73 carries the post-translational modification Phosphoserine; by PKA. Positions 111-245 (YGFVYELESG…EQTNMEEDME (135 aa)) are thioredoxin fold.

Belongs to the phosducin family. In terms of assembly, interacts with CRX. Forms a complex with the beta and gamma subunits of the GTP-binding protein, transducin. Light-induced changes in cyclic nucleotide levels modulate the phosphorylation of this protein by cAMP kinase.

It localises to the cytoplasm. It is found in the cytosol. The protein localises to the nucleus. Its subcellular location is the cell projection. The protein resides in the cilium. It localises to the photoreceptor outer segment. It is found in the photoreceptor inner segment. Its function is as follows. Inhibits the transcriptional activation activity of the cone-rod homeobox CRX. May participate in the regulation of visual phototransduction or in the integration of photoreceptor metabolism. The chain is Phosducin (PDC) from Bos taurus (Bovine).